A 3637-amino-acid chain; its full sequence is Replicase polyprotein 1ab (3637 aa).

A C4-type; atypical zinc finger spans residues 8–28 (CLCTPNARVFWERGQVYCTRC). One can recognise a Peptidase C31 domain in the interval 69–181 (ECRPGGMCWL…KGLCPFADAR (113 aa)). The tract at residues 69–183 (ECRPGGMCWL…LCPFADARAN (115 aa)) is PCP1-alpha. Catalysis depends on for Nsp1-alpha papain-like cysteine proteinase activity residues Cys76 and His147. A PCP1-beta region spans residues 262-380 (RDTKFSKCWE…KFRFQTRKYY (119 aa)). Residues 262–381 (RDTKFSKCWE…FRFQTRKYYG (120 aa)) form the Peptidase C32 domain. Active-site for Nsp1-beta papain-like cysteine proteinase activity residues include Cys269 and His340. The Peptidase C33 domain occupies 381–486 (GYSPPGDGAC…RGVCGECEMG (106 aa)). Residues Cys390 and His456 each act as for Nsp2 cysteine proteinase activity in the active site. 2 disordered regions span residues 676-743 (CKPK…AALK) and 865-899 (QQKT…GVSL). The span at 678 to 689 (PKRKRSRKKKTR) shows a compositional bias: basic residues. Basic and acidic residues-rich tracts occupy residues 714–727 (DTRE…KAEK) and 873–895 (GERE…KRDL). 7 helical membrane passes run 940–960 (WLNH…SFIF), 981–1001 (VLLC…CVFG), 1083–1103 (FYFL…AVAL), 1287–1307 (IADF…SAWL), 1362–1382 (ALMV…SLLV), 1390–1410 (CLLM…PFVL), and 1423–1443 (VQFF…VVLI). The HD1 stretch occupies residues 979 to 1103 (CCVLLCFYLP…LGLVFLAVAL (125 aa)). The HD2 stretch occupies residues 1287–1446 (IADFVCLGLY…ASVVVLISSW (160 aa)). One can recognise a Peptidase S32 domain in the interval 1511–1712 (GSLRTRGCAK…AVVESLPALE (202 aa)). Residues His1549, Asp1574, and Ser1626 each act as charge relay system; for 3C-like serine proteinase activity in the active site. The next 5 membrane-spanning stretches (helical) occupy residues 1735-1755 (DVPV…VMLA), 1761-1781 (FALS…AVAF), 1801-1821 (LVIA…LGQL), 1824-1844 (CCLM…LYLG), and 1853-1873 (EIFF…SLFK). Positions 1735–1872 (DVPVIRIAFF…MFLPLFLSLF (138 aa)) are HD3. The region spanning 2214–2372 (SLNGLQQASA…LPYKLHPVRG (159 aa)) is the NiRAN domain. One can recognise a RdRp catalytic domain in the interval 2611-2745 (GRCLEADLAS…YDESSELPNY (135 aa)). The region spanning 2865–2928 (KKKCRTCAHC…SPVMSLNTEL (64 aa)) is the AV ZBD domain. Zn(2+)-binding residues include Cys2871, Cys2874, Cys2884, Cys2889, His2892, His2894, His2896, His2898, Cys2905, His2907, Cys2914, and Cys2917. The (+)RNA virus helicase ATP-binding domain occupies 2985–3137 (QVMKVAQTCA…AFALMLGRQL (153 aa)). An ATP-binding site is contributed by 3013 to 3020 (GAPGTGKT). The region spanning 3138-3269 (IEVFRFGPSI…CGEQPMMISE (132 aa)) is the (+)RNA virus helicase C-terminal domain. In terms of domain architecture, AV-Nsp11N/CoV-Nsp15M spans 3293–3389 (EGTASPLPQV…LTKFLKGKPV (97 aa)). Residues 3391 to 3513 (LPDSLMSTGR…MVWKDATAYF (123 aa)) enclose the NendoU domain. Residues His3422, His3437, and Lys3466 contribute to the active site.

The protein belongs to the arteriviridae polyprotein family. In terms of processing, specific enzymatic cleavages in vivo by its own proteases yield mature proteins. There are two alternative pathways for processing. Either nsp4-5 is cleaved, which represents the major pathway or the nsp5-6 and nsp6-7 are processed, which represents the minor pathway. The major pathway occurs when nsp2 acts as a cofactor for nsp4.

The protein resides in the host membrane. It localises to the host cytoplasm. The protein localises to the host perinuclear region. It catalyses the reaction RNA(n) + a ribonucleoside 5'-triphosphate = RNA(n+1) + diphosphate. The enzyme catalyses ATP + H2O = ADP + phosphate + H(+). The catalysed reaction is uridylyl-uridylyl-ribonucleotide-RNA = a 3'-end uridylyl-2',3'-cyclophospho-uridine-RNA + a 5'-end dephospho-ribonucleoside-RNA. The replicase polyprotein 1ab is a multifunctional protein: it contains the activities necessary for the transcription of negative stranded RNA, leader RNA, subgenomic mRNAs and progeny virion RNA as well as proteinases responsible for the cleavage of the polyprotein into functional products. In terms of biological role, the Nsp1 chain is essential for viral subgenomic mRNA synthesis. Functionally, the 3C-like serine proteinase chain is responsible for the majority of cleavages as it cleaves the C-terminus of the polyprotein. Its function is as follows. The helicase chain, which contains a zinc finger structure, displays RNA and DNA duplex-unwinding activities with 5' to 3' polarity. Plays a role in viral transcription/replication and prevents the simultaneous activation of host cell dsRNA sensors, such as MDA5/IFIH1, OAS, and PKR. Acts by degrading the 5'-polyuridines generated during replication of the poly(A) region of viral genomic and subgenomic RNAs. Catalyzes a two-step reaction in which a 2'3'-cyclic phosphate (2'3'-cP) is first generated by 2'-O transesterification, which is then hydrolyzed to a 3'-phosphate (3'-P). If not degraded, poly(U) RNA would hybridize with poly(A) RNA tails and activate host dsRNA sensors. In Mus musculus domesticus (western European house mouse), this protein is Replicase polyprotein 1ab (rep).